A 330-amino-acid polypeptide reads, in one-letter code: Src kinase-associated phosphoprotein 2-B (330 aa).

A disordered region spans residues 57 to 84 (DKAEDDDQEENDGFPLPPDAVSLASDRD). Over residues 59–68 (AEDDDQEEND) the composition is skewed to acidic residues. The PH domain maps to 105 to 208 (EYLKAGYLEK…WINAIMNSRG (104 aa)). A disordered region spans residues 236-261 (ELPEESEKPVTETETQKATPVPVNNT). Positions 240–250 (ESEKPVTETET) are enriched in basic and acidic residues. Positions 251–261 (QKATPVPVNNT) are enriched in polar residues. An SH3 domain is found at 268-329 (DYANFYRGLW…PKAYIIEMYD (62 aa)).

Belongs to the SKAP family. Phosphorylated on tyrosines.

It localises to the cytoplasm. Functionally, may be involved in B-cell and macrophage adhesion processes. May play a role in src signaling pathway. In Xenopus laevis (African clawed frog), this protein is Src kinase-associated phosphoprotein 2-B (skap2-b).